Here is a 320-residue protein sequence, read N- to C-terminus: Cytochrome f (320 aa).

An N-terminal signal peptide occupies residues M1–A35. Heme is bound by residues Y36, C56, C59, and H60. A helical membrane pass occupies residues V286–K306.

The protein belongs to the cytochrome f family. The 4 large subunits of the cytochrome b6-f complex are cytochrome b6, subunit IV (17 kDa polypeptide, petD), cytochrome f and the Rieske protein, while the 4 small subunits are PetG, PetL, PetM and PetN. The complex functions as a dimer. Requires heme as cofactor.

The protein resides in the plastid. The protein localises to the chloroplast thylakoid membrane. In terms of biological role, component of the cytochrome b6-f complex, which mediates electron transfer between photosystem II (PSII) and photosystem I (PSI), cyclic electron flow around PSI, and state transitions. This chain is Cytochrome f, found in Nasturtium officinale (Watercress).